Here is a 448-residue protein sequence, read N- to C-terminus: MAKHRYLPMTEQDEKEMLDVIGVKSIDDLFQDIPEKIRFKRDYDLKPAKSEPALLRELSKLASKNANTTEYASFLGAGVYSHYIPTVVDHVISRSEFYTAYTPYQPEISQGELQAIFEFQTMIAELTGMDLANSSMYDGGTALAEAAMLASGHTKRKKILISGAVHPESSNVLKTYATGQHIEVEVIPELDGKTDIEALKKALSDDIAGFVVQYPNFYGQVEPLAELEKLVHENNSLLLVSSNPLSLGLLTPPGEFGADIVVGDSQVFGIPESFGGPHCGFFAVTNKLMRKVPGRLVGETVDENGKRGYVLTLQAREQHIRRDKATSNICSNQALNALASSVAMATLGKTGLVEMAKQNLDKSHYAKQKFREKGFEVLFSDGFFNEFVVKLSKPIKEVNESLLDEGIIGGYDLGFYEEKYKHHMLVAVTEMRTKEEIDAFVASLEGAK.

It belongs to the GcvP family. N-terminal subunit subfamily. As to quaternary structure, the glycine cleavage system is composed of four proteins: P, T, L and H. In this organism, the P 'protein' is a heterodimer of two subunits.

The enzyme catalyses N(6)-[(R)-lipoyl]-L-lysyl-[glycine-cleavage complex H protein] + glycine + H(+) = N(6)-[(R)-S(8)-aminomethyldihydrolipoyl]-L-lysyl-[glycine-cleavage complex H protein] + CO2. The glycine cleavage system catalyzes the degradation of glycine. The P protein binds the alpha-amino group of glycine through its pyridoxal phosphate cofactor; CO(2) is released and the remaining methylamine moiety is then transferred to the lipoamide cofactor of the H protein. This Listeria monocytogenes serotype 4a (strain HCC23) protein is Probable glycine dehydrogenase (decarboxylating) subunit 1.